A 542-amino-acid polypeptide reads, in one-letter code: uncharacterized protein (542 aa).

Topologically, residues 1–78 (MSVQKEEYDI…EEKKLVRKMD (78 aa)) are extracellular. A helical transmembrane segment spans residues 79-99 (LKIFLWVFIMFAFLDLIRKNI). At 100 to 119 (ARAVSDNFIVDLKMNTNDYN) the chain is on the cytoplasmic side. Residues 120–140 (LGQTVYLVIFLASELPGNLLS) form a helical membrane-spanning segment. Residues 141-147 (KRFGPER) lie on the Extracellular side of the membrane. A helical transmembrane segment spans residues 148 to 168 (VIPVQIVLWSVICITQAGLKN). The Cytoplasmic portion of the chain corresponds to 169-176 (RGQFIATR). Residues 177–197 (CLLGMVQGGFIPDNILYLSYY) traverse the membrane as a helical segment. Over 198-208 (YTGAELTFRLS) the chain is Extracellular. A helical transmembrane segment spans residues 209-229 (FFWCAIPLFQILGSLLASGII). At 230–241 (EMRGIHNLAGWQ) the chain is on the cytoplasmic side. Residues 242 to 262 (YLFIIEGFLSLSVGVASFYLM) traverse the membrane as a helical segment. Residues 263–326 (RRGPTQTGES…TLTEFDLWPL (64 aa)) are Extracellular-facing. A helical transmembrane segment spans residues 327–347 (FIQGITAFISLQTVGSYLSLI). Residues 348–359 (LKSLNYSTFLSN) are Cytoplasmic-facing. Residues 360–380 (ILAIPGQALLLINLPLAALLS) traverse the membrane as a helical segment. At 381–387 (RKLKEKS) the chain is on the extracellular side. Residues 388–408 (LCVGIANVWVLPFIVSLVALP) form a helical membrane-spanning segment. Residues 409-416 (TDTNPWIK) lie on the Cytoplasmic side of the membrane. Residues 417–437 (YILLTGILGLPYTHSILAGWV) traverse the membrane as a helical segment. At 438-482 (SEISNSVRSRTVGTALYNMSAQVGAIIASNMYRNDDKPYYTRGNK) the chain is on the extracellular side. The helical transmembrane segment at 483 to 503 (ILLGFTCFNICMAVATKFYYI) threads the bilayer. Topologically, residues 504–542 (SRNKYKDRKWNSMTKEEQINYLDTTKDKGMKRLDYRFIH) are cytoplasmic.

The protein belongs to the major facilitator superfamily. Allantoate permease family.

It localises to the membrane. This is an uncharacterized protein from Saccharomyces cerevisiae (strain ATCC 204508 / S288c) (Baker's yeast).